Consider the following 122-residue polypeptide: Holo-[acyl-carrier-protein] synthase (122 aa).

2 residues coordinate Mg(2+): D8 and E56.

The protein belongs to the P-Pant transferase superfamily. AcpS family. Requires Mg(2+) as cofactor.

The protein localises to the cytoplasm. The enzyme catalyses apo-[ACP] + CoA = holo-[ACP] + adenosine 3',5'-bisphosphate + H(+). Functionally, transfers the 4'-phosphopantetheine moiety from coenzyme A to a Ser of acyl-carrier-protein. In Alkaliphilus metalliredigens (strain QYMF), this protein is Holo-[acyl-carrier-protein] synthase.